The following is a 164-amino-acid chain: R-phycoerythrin alpha chain (164 aa).

Positions 47, 81, 82, 84, 88, 137, 139, and 142 each coordinate (2R,3E)-phycoerythrobilin.

It belongs to the phycobiliprotein family. Heterododecamer of 6 alpha and 6 beta chains. The basic functional unit of phycobiliproteins is a ring-shaped hexamer formed from two back-to-back trimers contacting via the alpha chain subunits. The trimers are composed of alpha/beta subunit heterodimers arranged around a three-fold axis of symmetry. The phycoerythrins also contain a gamma subunit which is located in the center of the hexamer. Post-translationally, contains two covalently linked phycoerythrobilin chromophores.

It localises to the plastid. The protein resides in the chloroplast thylakoid membrane. Functionally, light-harvesting photosynthetic tetrapyrrole chromophore-protein from the phycobiliprotein complex. The sequence is that of R-phycoerythrin alpha chain (cpeA) from Griffithsia monilis (Red alga).